Reading from the N-terminus, the 224-residue chain is Casparian strip membrane protein 1 (224 aa).

Residues methionine 1 to alanine 22 are disordered. Topologically, residues methionine 1–cysteine 62 are cytoplasmic. Residues leucine 63–isoleucine 83 traverse the membrane as a helical segment. Over serine 84 to alanine 110 the chain is Extracellular. The chain crosses the membrane as a helical span at residues phenylalanine 111 to phenylalanine 131. The Cytoplasmic portion of the chain corresponds to serine 132–arginine 145. A helical membrane pass occupies residues leucine 146–alanine 166. Topologically, residues alanine 167–valine 200 are extracellular. The helical transmembrane segment at valine 201–isoleucine 221 threads the bilayer. Residues arginine 222–arginine 224 are Cytoplasmic-facing.

It belongs to the Casparian strip membrane proteins (CASP) family. As to quaternary structure, homodimer and heterodimers.

The protein localises to the cell membrane. Regulates membrane-cell wall junctions and localized cell wall deposition. Required for establishment of the Casparian strip membrane domain (CSD) and the subsequent formation of Casparian strips, a cell wall modification of the root endodermis that determines an apoplastic barrier between the intraorganismal apoplasm and the extraorganismal apoplasm and prevents lateral diffusion. The sequence is that of Casparian strip membrane protein 1 from Oryza sativa subsp. indica (Rice).